The following is a 195-amino-acid chain: Cytochrome c oxidase assembly protein CtaG (195 aa).

Residues 1 to 7 (MSGGKPR) are Cytoplasmic-facing. The helical; Signal-anchor for type II membrane protein transmembrane segment at 8–30 (SNTRTVAMLAGVVVLMGALSWAA) threads the bilayer. Over 31 to 195 (VPFYSWFCKV…LDAKTEPTVN (165 aa)) the chain is Periplasmic.

It belongs to the COX11/CtaG family.

It localises to the cell inner membrane. Its function is as follows. Exerts its effect at some terminal stage of cytochrome c oxidase synthesis, probably by being involved in the insertion of the copper B into subunit I. The polypeptide is Cytochrome c oxidase assembly protein CtaG (Paracoccus denitrificans (strain Pd 1222)).